The primary structure comprises 320 residues: 4-hydroxythreonine-4-phosphate dehydrogenase (320 aa).

A substrate-binding site is contributed by Thr132. A divalent metal cation-binding residues include His161, His205, and His258. Substrate is bound by residues Lys266, Asn275, and Arg284.

Belongs to the PdxA family. In terms of assembly, homodimer. Requires a divalent metal cation as cofactor.

The protein resides in the cytoplasm. It catalyses the reaction 4-(phosphooxy)-L-threonine + NAD(+) = 3-amino-2-oxopropyl phosphate + CO2 + NADH. Its pathway is cofactor biosynthesis; pyridoxine 5'-phosphate biosynthesis; pyridoxine 5'-phosphate from D-erythrose 4-phosphate: step 4/5. Catalyzes the NAD(P)-dependent oxidation of 4-(phosphooxy)-L-threonine (HTP) into 2-amino-3-oxo-4-(phosphooxy)butyric acid which spontaneously decarboxylates to form 3-amino-2-oxopropyl phosphate (AHAP). The polypeptide is 4-hydroxythreonine-4-phosphate dehydrogenase (Aquifex aeolicus (strain VF5)).